Reading from the N-terminus, the 616-residue chain is Dihydroxy-acid dehydratase (616 aa).

A Mg(2+)-binding site is contributed by D81. C122 is a [2Fe-2S] cluster binding site. Mg(2+) contacts are provided by D123 and K124. K124 is subject to N6-carboxylysine. Residue C195 coordinates [2Fe-2S] cluster. A Mg(2+)-binding site is contributed by E491. S517 functions as the Proton acceptor in the catalytic mechanism.

It belongs to the IlvD/Edd family. As to quaternary structure, homodimer. Requires [2Fe-2S] cluster as cofactor. It depends on Mg(2+) as a cofactor.

It catalyses the reaction (2R)-2,3-dihydroxy-3-methylbutanoate = 3-methyl-2-oxobutanoate + H2O. It carries out the reaction (2R,3R)-2,3-dihydroxy-3-methylpentanoate = (S)-3-methyl-2-oxopentanoate + H2O. The protein operates within amino-acid biosynthesis; L-isoleucine biosynthesis; L-isoleucine from 2-oxobutanoate: step 3/4. Its pathway is amino-acid biosynthesis; L-valine biosynthesis; L-valine from pyruvate: step 3/4. Functionally, functions in the biosynthesis of branched-chain amino acids. Catalyzes the dehydration of (2R,3R)-2,3-dihydroxy-3-methylpentanoate (2,3-dihydroxy-3-methylvalerate) into 2-oxo-3-methylpentanoate (2-oxo-3-methylvalerate) and of (2R)-2,3-dihydroxy-3-methylbutanoate (2,3-dihydroxyisovalerate) into 2-oxo-3-methylbutanoate (2-oxoisovalerate), the penultimate precursor to L-isoleucine and L-valine, respectively. The chain is Dihydroxy-acid dehydratase from Salmonella dublin (strain CT_02021853).